Consider the following 2223-residue polypeptide: Protein CHROMATIN REMODELING 4 (2223 aa).

Positions 39-69 are disordered; the sequence is FDSPEYTSSSKPSKQRLKTDSTPERNSSKRK. Over residues 55 to 69 the composition is skewed to basic and acidic residues; sequence LKTDSTPERNSSKRK. The PHD-type zinc finger occupies 75–122; the sequence is YFECVICDLGGDLLCCDSCPRTYHTACLNPPLKRIPNGKWICPKCSPN. 4 stretches are compositionally biased toward basic and acidic residues: residues 173–187, 207–223, 248–285, and 294–305; these read EKGKSISAEESKSTG, SADDRPDSSSHGEDDLG, ESKLSDTEKTHEAPVEKLEHASSEIVENKTVAEMETGK, and ELNDGESLERCK. Disordered regions lie at residues 173–235, 248–381, and 441–474; these read EKGK…LPSD, ESKL…CLED, and AEDRIDSSSETGKSSRDSRLRDKDMDDSALGTEG. Positions 306 to 315 are enriched in basic residues; that stretch reads TDKKRAKKSL. Positions 353–368 are enriched in basic and acidic residues; it reads ETPEKVKKLPKEERRA. The span at 372 to 381 shows a compositional bias: polar residues; the sequence is TNKSSSCLED. Positions 441 to 466 are enriched in basic and acidic residues; sequence AEDRIDSSSETGKSSRDSRLRDKDMD. Chromo domains follow at residues 531 to 587 and 601 to 663; these read EEIE…YKAK and KQPQ…ERNS. The Helicase ATP-binding domain occupies 701 to 878; that stretch reads RRCWHKSKNV…YNLLNFLQPS (178 aa). 714–721 is a binding site for ATP; sequence DEMGLGKT. Residues 829 to 832 carry the DEAH box motif; the sequence is DEGH. The Nuclear localization signal motif lies at 902 to 909; sequence LKKLVAPH. In terms of domain architecture, Helicase C-terminal spans 1008–1167; the sequence is LLHSMLKVLH…GSQKEFEDIL (160 aa). 6 disordered regions span residues 1268 to 1300, 1341 to 1380, 1394 to 1463, 1483 to 1511, 1760 to 1779, and 2006 to 2223; these read EETAEEQVGAESPALVTDDTGEPSSERKDDDVV, EAYAPHTSGPVNESGGEDEKEPEPELKKEYTPAGRALKEK, RRNS…ECLP, SESSRRNYSRPGSRQNRPITGPHFPFNLP, LSSLPSKSSRTDKSTKSSLF, and IPPF…LSDD. The span at 1363-1380 shows a compositional bias: basic and acidic residues; it reads EPELKKEYTPAGRALKEK. Residues 1375-1402 adopt a coiled-coil conformation; the sequence is RALKEKFTKLRERQKNLIARRNSVEESL. Positions 1403–1414 are enriched in polar residues; that stretch reads PSGNVDQVTEVA. Over residues 2009–2019 the composition is skewed to pro residues; the sequence is FVIPEPPPPAP. Over residues 2025–2035 the composition is skewed to basic residues; it reads SLRKKRKRKLH. 3 stretches are compositionally biased toward polar residues: residues 2039–2061, 2075–2096, and 2128–2148; these read QKTTDIGSSSHNAVESSSQGNPQ, GETSGSSQPKLPPHNLNSTEPL, and TGTTKSISLESQSSEPETINQ. Basic and acidic residues predominate over residues 2157 to 2171; it reads DEKVESERTPLHSDE. Residues 2189-2215 are a coiled coil; the sequence is IEAESQNTNAEEEAEAQEEDEESMKMV. A compositionally biased stretch (acidic residues) spans 2198–2210; the sequence is AEEEAEAQEEDEE.

The protein belongs to the SNF2/RAD54 helicase family.

The protein localises to the nucleus. Chromatin-remodeling protein that binds DNA through histones and regulates gene transcription. May specifically recognize and bind trimethylated 'Lys-27' (H3K27me3) and non-methylated 'Lys-4' of histone H3. Probable chromatin remodeling factor. The protein is Protein CHROMATIN REMODELING 4 of Arabidopsis thaliana (Mouse-ear cress).